A 250-amino-acid polypeptide reads, in one-letter code: Small ribosomal subunit protein uS3 (250 aa).

The KH type-2 domain occupies 39-107; that stretch reads VREFLTKKLK…PAQVSINEID (69 aa). Residues 215-250 are disordered; that stretch reads MNPAPAEERPAKRGRGRGEGQERRGRRGDRAADKGE. Basic and acidic residues predominate over residues 220–250; it reads AEERPAKRGRGRGEGQERRGRRGDRAADKGE.

Belongs to the universal ribosomal protein uS3 family. As to quaternary structure, part of the 30S ribosomal subunit. Forms a tight complex with proteins S10 and S14.

In terms of biological role, binds the lower part of the 30S subunit head. Binds mRNA in the 70S ribosome, positioning it for translation. The sequence is that of Small ribosomal subunit protein uS3 from Acinetobacter baumannii (strain AB307-0294).